Here is a 1108-residue protein sequence, read N- to C-terminus: TBC1 domain family member 8B (1108 aa).

GRAM domains follow at residues 143 to 210 (LRFE…ERTS) and 283 to 351 (QSFR…ELPD). Residues 469–656 (GVPETLRGEL…NVVDCFFYDG (188 aa)) enclose the Rab-GAP TBC domain. One can recognise an EF-hand domain in the interval 822–857 (HSRSLARSAFHLLDENGDGLVNFKEFICGLDILYNR). D835, N837, D839, and E846 together coordinate Ca(2+). The interval 961-1059 (GRKLQDSSPQ…PTDTPSSPCT (99 aa)) is disordered. A compositionally biased stretch (low complexity) spans 967-998 (SSPQKTPQTTPTSTSQPESSPTKPTSPESETP). The segment covering 1010–1024 (SPVSQHETAPSHSDI) has biased composition (polar residues). A compositionally biased stretch (low complexity) spans 1025 to 1057 (TPNSTSHPSTPTSSPTETSSPVLDTPTDTPSSP).

It localises to the cytoplasm. Its subcellular location is the cytosol. In terms of biological role, involved in vesicular recycling, probably as a GTPase-activating protein for Rab family protein(s). The protein is TBC1 domain family member 8B (tbc1d8b) of Danio rerio (Zebrafish).